The sequence spans 197 residues: Imidazoleglycerol-phosphate dehydratase (197 aa).

The protein belongs to the imidazoleglycerol-phosphate dehydratase family.

The protein resides in the cytoplasm. The catalysed reaction is D-erythro-1-(imidazol-4-yl)glycerol 3-phosphate = 3-(imidazol-4-yl)-2-oxopropyl phosphate + H2O. The protein operates within amino-acid biosynthesis; L-histidine biosynthesis; L-histidine from 5-phospho-alpha-D-ribose 1-diphosphate: step 6/9. This is Imidazoleglycerol-phosphate dehydratase from Rhodopseudomonas palustris (strain BisA53).